We begin with the raw amino-acid sequence, 154 residues long: Small heat shock protein C2 (154 aa).

A sHSP domain is found at 43-154 (STEKNLIPRT…GKTRKIEVKG (112 aa)).

It belongs to the small heat shock protein (HSP20) family.

The protein is Small heat shock protein C2 (hspC2) of Rickettsia felis (strain ATCC VR-1525 / URRWXCal2) (Rickettsia azadi).